A 248-amino-acid chain; its full sequence is NLP effector protein Pc121494 (248 aa).

An N-terminal signal peptide occupies residues 1-19; that stretch reads MKFIAVLIAAIASLSAVQA. The Hepta-peptide GHRHDWE motif motif lies at 124-130; sequence GHRNGWE. N-linked (GlcNAc...) asparagine glycosylation is present at N143.

It belongs to the Necrosis inducing protein (NPP1) family.

It is found in the secreted. Secreted effector that contributes strongly to virulence during infection by P.capsici. This is NLP effector protein Pc121494 from Phytophthora capsici.